Reading from the N-terminus, the 251-residue chain is uncharacterized protein (251 aa).

The segment at 229–251 (TSTETSPEHQADLKDDNSDISST) is disordered. Basic and acidic residues predominate over residues 234–245 (SPEHQADLKDDN).

This is an uncharacterized protein from Acanthamoeba polyphaga (Amoeba).